A 207-amino-acid polypeptide reads, in one-letter code: LexA repressor (207 aa).

Positions 28–48 form a DNA-binding region, H-T-H motif; sequence RAEIARHLGFKSANAAEEHLK. Active-site for autocatalytic cleavage activity residues include Ser124 and Lys161.

Belongs to the peptidase S24 family. As to quaternary structure, homodimer.

The enzyme catalyses Hydrolysis of Ala-|-Gly bond in repressor LexA.. Its function is as follows. Represses a number of genes involved in the response to DNA damage (SOS response), including recA and lexA. In the presence of single-stranded DNA, RecA interacts with LexA causing an autocatalytic cleavage which disrupts the DNA-binding part of LexA, leading to derepression of the SOS regulon and eventually DNA repair. The polypeptide is LexA repressor (Pseudoalteromonas atlantica (strain T6c / ATCC BAA-1087)).